The primary structure comprises 470 residues: Zinc finger protein weckle (470 aa).

The interval 1–103 (MGVPTSDWIY…DALRLEYGLP (103 aa)) is required for homodimerization. The ZAD domain occupies 10–82 (YWCRLCARDD…SKVQAIFELL (73 aa)). Zn(2+)-binding residues include C12, C15, C55, and C58. Residues 156 to 265 (NSDPKVLASP…LSMSPHGSQS (110 aa)) form a disordered region. At S168 the chain carries Phosphoserine. Residues 195 to 208 (ESDDEEAILDEDEA) show a composition bias toward acidic residues. Over residues 214–225 (LKRKRGRPKGSG) the composition is skewed to basic residues. Basic and acidic residues predominate over residues 237-254 (TSREPDDNAKSKQDDKTS). The segment covering 255–265 (ELSMSPHGSQS) has biased composition (polar residues). 6 consecutive C2H2-type zinc fingers follow at residues 271–294 (YPCK…HDMH), 300–322 (YVCD…QLVH), 328–350 (CICP…SQTH), 355–377 (FECN…KYVH), 383–405 (FKCE…LLGH), and 411–434 (YVCK…WKKH).

In terms of assembly, homodimer. Interacts with Myd88 and Toll.

The protein resides in the cell membrane. Its function is as follows. Acts as an adapter to assemble/stabilize a Toll/wek/Myd88/tube complex; required for efficient recruitment of Myd88 to Toll. Dispensable for innate immune response; plays a minimal role, if any, in the immune defense against Gram-positive bacteria and fungi. Involved in dorsoventral axis determination. The sequence is that of Zinc finger protein weckle from Drosophila melanogaster (Fruit fly).